A 332-amino-acid polypeptide reads, in one-letter code: Glycerol-3-phosphate dehydrogenase [NAD(P)+] (332 aa).

NADPH contacts are provided by tryptophan 13, lysine 34, and lysine 108. Residues lysine 108, glycine 136, and serine 138 each contribute to the sn-glycerol 3-phosphate site. Alanine 140 is a binding site for NADPH. Sn-glycerol 3-phosphate-binding residues include lysine 191, aspartate 244, serine 254, arginine 255, and asparagine 256. Catalysis depends on lysine 191, which acts as the Proton acceptor. Residue arginine 255 participates in NADPH binding. NADPH-binding residues include valine 279 and glutamate 281.

Belongs to the NAD-dependent glycerol-3-phosphate dehydrogenase family.

The protein localises to the cytoplasm. The catalysed reaction is sn-glycerol 3-phosphate + NAD(+) = dihydroxyacetone phosphate + NADH + H(+). It catalyses the reaction sn-glycerol 3-phosphate + NADP(+) = dihydroxyacetone phosphate + NADPH + H(+). Its pathway is membrane lipid metabolism; glycerophospholipid metabolism. Functionally, catalyzes the reduction of the glycolytic intermediate dihydroxyacetone phosphate (DHAP) to sn-glycerol 3-phosphate (G3P), the key precursor for phospholipid synthesis. The sequence is that of Glycerol-3-phosphate dehydrogenase [NAD(P)+] from Francisella tularensis subsp. novicida (strain U112).